Consider the following 542-residue polypeptide: MAIPGRQYGLILPKKTQPLHRVLQKPSVFGSDSDDDETSVSESLQREAAKKQAMKQTKLEIQKALAEDSTVYEYDSVYDEMQKKKEENNPKLLPGKDRKPKYIHNLLKAVEIRKKEQEKRMEKKIQREREMENGEFDDKEAFVTSAYKKKLEERAEEEEREKRAAALEAHLDVTKQKDLSGFYRHLLNQAVGEEAAPKSSFREARTVIKEEKLRGYPDETNSESRPPQQSCVLQRGAQEAEENPDADREFDDESSEDGEKRDHKVKSRGEDTGASMKHPKHHKNRAHSRSSSEERGLGTKHHSRGSQSRGHEHQDRQSRDQESCHKDRSHREEKSSHRHREASHKDHYWKKHEQEDKLKGREQEERQDREGKREKYSSREQERDRQRNDHDRYSEKEKKRKEKEEHTKARRERCEDSGKHREREKPEGHGQSSERHRDRRESSPRSRPKDDLDQERSSKARNTEKDKGEQGKPSHSETSLATKHRLAEERPEKGSEQERPPEAVSKFAKRSNEETVMSARDRYLARQMARINAKTYIEKEDD.

The interval 21–53 is disordered; it reads RVLQKPSVFGSDSDDDETSVSESLQREAAKKQA. 3 positions are modified to phosphoserine: serine 27, serine 31, and serine 33. Positions 103-172 form a coiled coil; sequence IHNLLKAVEI…RAAALEAHLD (70 aa). The segment at 105 to 169 is necessary for alternative splicing activity; the sequence is NLLKAVEIRK…REKRAAALEA (65 aa). Residues 190 to 516 are disordered; sequence AVGEEAAPKS…FAKRSNEETV (327 aa). Residues lysine 198 and lysine 209 each participate in a glycyl lysine isopeptide (Lys-Gly) (interchain with G-Cter in SUMO2) cross-link. Basic and acidic residues predominate over residues 200–217; the sequence is SFREARTVIKEEKLRGYP. Positions 223–232 are enriched in polar residues; the sequence is ESRPPQQSCV. A compositionally biased stretch (acidic residues) spans 239–256; sequence EAEENPDADREFDDESSE. Phosphoserine occurs at positions 254 and 255. Residues 257 to 271 are compositionally biased toward basic and acidic residues; it reads DGEKRDHKVKSRGED. Lysine 277 carries the post-translational modification N6-acetyllysine. Positions 277–288 are enriched in basic residues; sequence KHPKHHKNRAHS. Lysine 280 is covalently cross-linked (Glycyl lysine isopeptide (Lys-Gly) (interchain with G-Cter in SUMO2)). Composition is skewed to basic and acidic residues over residues 309–335, 343–475, and 485–501; these read RGHE…EEKS, SHKD…KPSH, and RLAE…ERPP. Residues 372-413 adopt a coiled-coil conformation; that stretch reads KREKYSSREQERDRQRNDHDRYSEKEKKRKEKEEHTKARRER. The residue at position 443 (serine 443) is a Phosphoserine.

Belongs to the NSRP1 family. In terms of assembly, interacts (via C-terminus) with SRSF1. Interacts (via C-terminus) with SRSF2.

It localises to the nucleus. The protein resides in the nucleus speckle. RNA-binding protein that mediates pre-mRNA alternative splicing regulation. This is Nuclear speckle splicing regulatory protein 1 (Nsrp1) from Mus musculus (Mouse).